A 120-amino-acid polypeptide reads, in one-letter code: Putative cysteine proteinase inhibitor 11 (120 aa).

An N-terminal signal peptide occupies residues 1–24 (MARHPGLLLILLAAVAAVATTSRA). The Secondary area of contact signature appears at 73 to 77 (QVVQG).

This sequence belongs to the cystatin family. Phytocystatin subfamily.

The protein resides in the secreted. Its function is as follows. Specific inhibitor of cysteine proteinases. Probably involved in the regulation of endogenous processes and in defense against pests and pathogens. This Oryza sativa subsp. japonica (Rice) protein is Putative cysteine proteinase inhibitor 11.